The primary structure comprises 270 residues: Formamidopyrimidine-DNA glycosylase (270 aa).

Pro2 functions as the Schiff-base intermediate with DNA in the catalytic mechanism. Glu3 (proton donor) is an active-site residue. The active-site Proton donor; for beta-elimination activity is Lys58. Positions 92, 111, and 153 each coordinate DNA. An FPG-type zinc finger spans residues 238–270 (SVYGASVCPVCGGALRQIRLAQRGTWFCPRCQR). The Proton donor; for delta-elimination activity role is filled by Arg260.

The protein belongs to the FPG family. As to quaternary structure, monomer. Zn(2+) serves as cofactor.

It carries out the reaction Hydrolysis of DNA containing ring-opened 7-methylguanine residues, releasing 2,6-diamino-4-hydroxy-5-(N-methyl)formamidopyrimidine.. The catalysed reaction is 2'-deoxyribonucleotide-(2'-deoxyribose 5'-phosphate)-2'-deoxyribonucleotide-DNA = a 3'-end 2'-deoxyribonucleotide-(2,3-dehydro-2,3-deoxyribose 5'-phosphate)-DNA + a 5'-end 5'-phospho-2'-deoxyribonucleoside-DNA + H(+). Functionally, involved in base excision repair of DNA damaged by oxidation or by mutagenic agents. Acts as a DNA glycosylase that recognizes and removes damaged bases. Has a preference for oxidized purines, such as 7,8-dihydro-8-oxoguanine (8-oxoG). Has AP (apurinic/apyrimidinic) lyase activity and introduces nicks in the DNA strand. Cleaves the DNA backbone by beta-delta elimination to generate a single-strand break at the site of the removed base with both 3'- and 5'-phosphates. This is Formamidopyrimidine-DNA glycosylase from Halorhodospira halophila (strain DSM 244 / SL1) (Ectothiorhodospira halophila (strain DSM 244 / SL1)).